The chain runs to 382 residues: Lipid-A-disaccharide synthase (382 aa).

It belongs to the LpxB family.

The enzyme catalyses 2-N,3-O-bis[(3R)-3-hydroxytetradecanoyl]-alpha-D-glucosaminyl 1-phosphate + UDP-2-N,3-O-bis[(3R)-3-hydroxytetradecanoyl]-alpha-D-glucosamine = lipid A disaccharide (E. coli) + UDP + H(+). It catalyses the reaction a lipid X + a UDP-2-N,3-O-bis[(3R)-3-hydroxyacyl]-alpha-D-glucosamine = a lipid A disaccharide + UDP + H(+). Its pathway is glycolipid biosynthesis; lipid IV(A) biosynthesis; lipid IV(A) from (3R)-3-hydroxytetradecanoyl-[acyl-carrier-protein] and UDP-N-acetyl-alpha-D-glucosamine: step 5/6. Condensation of UDP-2,3-diacylglucosamine and 2,3-diacylglucosamine-1-phosphate to form lipid A disaccharide, a precursor of lipid A, a phosphorylated glycolipid that anchors the lipopolysaccharide to the outer membrane of the cell. This Escherichia coli O157:H7 protein is Lipid-A-disaccharide synthase.